The primary structure comprises 620 residues: Chaperone protein DnaK (620 aa).

The residue at position 197 (T197) is a Phosphothreonine; by autocatalysis. The tract at residues 597-620 (AMANKNNAEQPKKKDDDVIDAEVE) is disordered.

It belongs to the heat shock protein 70 family.

In terms of biological role, acts as a chaperone. The chain is Chaperone protein DnaK from Helicobacter pylori (strain G27).